Reading from the N-terminus, the 291-residue chain is 4-diphosphocytidyl-2-C-methyl-D-erythritol kinase (291 aa).

Residue Lys10 is part of the active site. Residue 94–104 participates in ATP binding; the sequence is PVSAGLAGGSS. The active site involves Asp136.

Belongs to the GHMP kinase family. IspE subfamily.

The enzyme catalyses 4-CDP-2-C-methyl-D-erythritol + ATP = 4-CDP-2-C-methyl-D-erythritol 2-phosphate + ADP + H(+). Its pathway is isoprenoid biosynthesis; isopentenyl diphosphate biosynthesis via DXP pathway; isopentenyl diphosphate from 1-deoxy-D-xylulose 5-phosphate: step 3/6. In terms of biological role, catalyzes the phosphorylation of the position 2 hydroxy group of 4-diphosphocytidyl-2C-methyl-D-erythritol. In Listeria innocua serovar 6a (strain ATCC BAA-680 / CLIP 11262), this protein is 4-diphosphocytidyl-2-C-methyl-D-erythritol kinase.